The following is a 486-amino-acid chain: MRAIHIVTTRLSSSFRPILLLDLVSSCSPPRQFSIPRRLICAAANGGGRSGSIVAPLVTEEDFHKKIDVNPPKGTRDFPPEDMRLRNWLFNHFKEVSRLYGYEEVDYPVLETEALFIRKAGEEIRDQLYCFEDRGNRRVALRPELTPSLARLVIQKGKSVSLPLKWFAIGQCWRYERMTRGRRREHYQWNMDIIGVPQVTAEAELISSIVTFFKRIGITASDVGFKVSSRKVLQELLKKYGVPEDLFGRVCIIIDKIEKIPIDEIKKELGFTGISEDAIEQLLQVLSVKSLDDLEDIIGGAGEAIADLKQLFSLAEKFGYSEWIQFDASVVRGLAYYTGIVFEGFDRKGKLRAICGGGRYDRLLSTYGGDDFPACGFGFGDAVIVELLKEKDLLPELGQEVENIVCALDKDLQGAAATVATALRDKGQTVDLVLESKPLKWVFKRAARVNARRLVLVGKTEWEDGSVSVKVLSSGEQFQVKLSDLE.

Belongs to the class-II aminoacyl-tRNA synthetase family.

The protein resides in the plastid. Its subcellular location is the chloroplast. The protein localises to the mitochondrion. It carries out the reaction tRNA(His) + L-histidine + ATP = L-histidyl-tRNA(His) + AMP + diphosphate + H(+). In Arabidopsis thaliana (Mouse-ear cress), this protein is Histidine--tRNA ligase, chloroplastic/mitochondrial.